The following is a 274-amino-acid chain: 3-methyl-2-oxobutanoate hydroxymethyltransferase (274 aa).

Positions 49 and 88 each coordinate Mg(2+). 3-methyl-2-oxobutanoate contacts are provided by residues 49-50 (DS), aspartate 88, and lysine 118. Residue glutamate 120 coordinates Mg(2+). Glutamate 187 serves as the catalytic Proton acceptor.

Belongs to the PanB family. As to quaternary structure, homodecamer; pentamer of dimers. Mg(2+) is required as a cofactor.

It is found in the cytoplasm. It carries out the reaction 3-methyl-2-oxobutanoate + (6R)-5,10-methylene-5,6,7,8-tetrahydrofolate + H2O = 2-dehydropantoate + (6S)-5,6,7,8-tetrahydrofolate. It participates in cofactor biosynthesis; (R)-pantothenate biosynthesis; (R)-pantoate from 3-methyl-2-oxobutanoate: step 1/2. Its function is as follows. Catalyzes the reversible reaction in which hydroxymethyl group from 5,10-methylenetetrahydrofolate is transferred onto alpha-ketoisovalerate to form ketopantoate. This is 3-methyl-2-oxobutanoate hydroxymethyltransferase from Rhodopseudomonas palustris (strain TIE-1).